The chain runs to 430 residues: Trigger factor (430 aa).

Residues 163-248 (GNIAIIDFKG…IKDIKVKELP (86 aa)) enclose the PPIase FKBP-type domain.

Belongs to the FKBP-type PPIase family. Tig subfamily.

The protein localises to the cytoplasm. The enzyme catalyses [protein]-peptidylproline (omega=180) = [protein]-peptidylproline (omega=0). Its function is as follows. Involved in protein export. Acts as a chaperone by maintaining the newly synthesized protein in an open conformation. Functions as a peptidyl-prolyl cis-trans isomerase. This is Trigger factor from Clostridium botulinum (strain ATCC 19397 / Type A).